Here is a 228-residue protein sequence, read N- to C-terminus: Auxin-responsive protein IAA16 (228 aa).

The short motif at 19–23 (LSLAL) is the EAR-like (transcriptional repression) element. Residues 28–39 (SSSGLQGNTSTA) are compositionally biased toward polar residues. 2 disordered regions span residues 28–57 (SSSG…PAAP) and 70–90 (NLAS…AAAA). Positions 97–214 (ARFVKVNMDG…RVLRSSDLNA (118 aa)) constitute a PB1 domain.

Belongs to the Aux/IAA family. In terms of assembly, homodimers and heterodimers. In terms of tissue distribution, expressed in roots, flowers and seedlings.

It localises to the nucleus. Aux/IAA proteins are short-lived transcriptional factors that function as repressors of early auxin response genes at low auxin concentrations. This is Auxin-responsive protein IAA16 (IAA16) from Oryza sativa subsp. japonica (Rice).